We begin with the raw amino-acid sequence, 273 residues long: Dermonecrotic toxin LapSicTox-alphaIB1bi (273 aa).

Histidine 5 is an active-site residue. Positions 25 and 27 each coordinate Mg(2+). Histidine 41 serves as the catalytic Nucleophile. Intrachain disulfides connect cysteine 45–cysteine 51 and cysteine 47–cysteine 190. A Mg(2+)-binding site is contributed by aspartate 85. N-linked (GlcNAc...) asparagine glycans are attached at residues asparagine 189 and asparagine 250.

The protein belongs to the arthropod phospholipase D family. Class II subfamily. It depends on Mg(2+) as a cofactor. Expressed by the venom gland.

The protein resides in the secreted. The enzyme catalyses an N-(acyl)-sphingosylphosphocholine = an N-(acyl)-sphingosyl-1,3-cyclic phosphate + choline. It catalyses the reaction an N-(acyl)-sphingosylphosphoethanolamine = an N-(acyl)-sphingosyl-1,3-cyclic phosphate + ethanolamine. It carries out the reaction a 1-acyl-sn-glycero-3-phosphocholine = a 1-acyl-sn-glycero-2,3-cyclic phosphate + choline. The catalysed reaction is a 1-acyl-sn-glycero-3-phosphoethanolamine = a 1-acyl-sn-glycero-2,3-cyclic phosphate + ethanolamine. In terms of biological role, dermonecrotic toxins cleave the phosphodiester linkage between the phosphate and headgroup of certain phospholipids (sphingolipid and lysolipid substrates), forming an alcohol (often choline) and a cyclic phosphate. This toxin acts on sphingomyelin (SM). It may also act on ceramide phosphoethanolamine (CPE), lysophosphatidylcholine (LPC) and lysophosphatidylethanolamine (LPE), but not on lysophosphatidylserine (LPS), and lysophosphatidylglycerol (LPG). It acts by transphosphatidylation, releasing exclusively cyclic phosphate products as second products. Induces dermonecrosis, hemolysis, increased vascular permeability, edema, inflammatory response, and platelet aggregation. In Loxosceles apachea (Apache recluse spider), this protein is Dermonecrotic toxin LapSicTox-alphaIB1bi.